We begin with the raw amino-acid sequence, 392 residues long: NAC domain-containing protein 58 (392 aa).

The region spanning 9 to 173 is the NAC domain; that stretch reads LPPGFRFHPT…DWVLCRIYKK (165 aa). The tract at residues 317-345 is disordered; that stretch reads STSAGAVVEPPAVTGKRKRSSDGGEPTIQ.

Expressed in leaves, nodes, internodes and mature seeds. Highly expressed in roots. Expressed in leaf sheaths, flag leaves and inflorescences. Expressed in primary and lateral roots, particularly in the vascular tissues. Expressed in the primary phloem of the culm and leaf sheaths. Expressed principally in the primary phloem and in the peripheral zone of the leaf vascular bundles. Expressed in the floral tissues.

The protein resides in the nucleus. Its function is as follows. Transcription factor that acts as a positive regulator of the jasmonate (JA) pathway to mediate leaf senescence. May directly regulate LOX2, AOC, AOS2, AOC1 and OPR7, which are genes involved in the biosynthesis of JA. Regulates positively leaf senescence by directly targeting senescence-associated genes (SAGs) related to chlorophyll degradation, nutrient transport and other genes associated with abscisic acid-induced leaf senescence. Transcription activator that plays a role in mediating abiotic stress responses through the abscisic acid (ABA) pathway. Possesses transcriptional activator activity in yeast. This Oryza sativa subsp. japonica (Rice) protein is NAC domain-containing protein 58.